The chain runs to 146 residues: 3-dehydroquinate dehydratase (146 aa).

Residue Tyr22 is the Proton acceptor of the active site. Substrate-binding residues include Asn74, His80, and Asp87. His100 acts as the Proton donor in catalysis. Substrate is bound by residues 101–102 (LS) and Arg111.

This sequence belongs to the type-II 3-dehydroquinase family. Homododecamer.

The enzyme catalyses 3-dehydroquinate = 3-dehydroshikimate + H2O. It participates in metabolic intermediate biosynthesis; chorismate biosynthesis; chorismate from D-erythrose 4-phosphate and phosphoenolpyruvate: step 3/7. Functionally, catalyzes a trans-dehydration via an enolate intermediate. The polypeptide is 3-dehydroquinate dehydratase (Clostridium perfringens (strain 13 / Type A)).